We begin with the raw amino-acid sequence, 136 residues long: Nucleoside diphosphate kinase (136 aa).

The ATP site is built by lysine 10, phenylalanine 58, arginine 86, threonine 92, arginine 104, and asparagine 114. The active-site Pros-phosphohistidine intermediate is histidine 117.

Belongs to the NDK family. In terms of assembly, homotetramer. The cofactor is Mg(2+).

It localises to the cytoplasm. It carries out the reaction a 2'-deoxyribonucleoside 5'-diphosphate + ATP = a 2'-deoxyribonucleoside 5'-triphosphate + ADP. It catalyses the reaction a ribonucleoside 5'-diphosphate + ATP = a ribonucleoside 5'-triphosphate + ADP. Functionally, major role in the synthesis of nucleoside triphosphates other than ATP. The ATP gamma phosphate is transferred to the NDP beta phosphate via a ping-pong mechanism, using a phosphorylated active-site intermediate. The polypeptide is Nucleoside diphosphate kinase (Mycobacterium sp. (strain MCS)).